We begin with the raw amino-acid sequence, 100 residues long: Urease subunit gamma (100 aa).

Belongs to the urease gamma subunit family. In terms of assembly, heterotrimer of UreA (gamma), UreB (beta) and UreC (alpha) subunits. Three heterotrimers associate to form the active enzyme.

The protein resides in the cytoplasm. The catalysed reaction is urea + 2 H2O + H(+) = hydrogencarbonate + 2 NH4(+). The protein operates within nitrogen metabolism; urea degradation; CO(2) and NH(3) from urea (urease route): step 1/1. This chain is Urease subunit gamma, found in Staphylococcus epidermidis (strain ATCC 35984 / DSM 28319 / BCRC 17069 / CCUG 31568 / BM 3577 / RP62A).